Consider the following 307-residue polypeptide: Methionyl-tRNA formyltransferase (307 aa).

Position 109–112 (109–112 (SMLP)) interacts with (6S)-5,6,7,8-tetrahydrofolate.

Belongs to the Fmt family.

The enzyme catalyses L-methionyl-tRNA(fMet) + (6R)-10-formyltetrahydrofolate = N-formyl-L-methionyl-tRNA(fMet) + (6S)-5,6,7,8-tetrahydrofolate + H(+). Functionally, attaches a formyl group to the free amino group of methionyl-tRNA(fMet). The formyl group appears to play a dual role in the initiator identity of N-formylmethionyl-tRNA by promoting its recognition by IF2 and preventing the misappropriation of this tRNA by the elongation apparatus. In Orientia tsutsugamushi (strain Boryong) (Rickettsia tsutsugamushi), this protein is Methionyl-tRNA formyltransferase.